Here is a 208-residue protein sequence, read N- to C-terminus: Ribosomal RNA large subunit methyltransferase E (208 aa).

Residues Gly63, Trp65, Asp83, Asp99, and Asp124 each contribute to the S-adenosyl-L-methionine site. The active-site Proton acceptor is the Lys164.

The protein belongs to the class I-like SAM-binding methyltransferase superfamily. RNA methyltransferase RlmE family.

Its subcellular location is the cytoplasm. It catalyses the reaction uridine(2552) in 23S rRNA + S-adenosyl-L-methionine = 2'-O-methyluridine(2552) in 23S rRNA + S-adenosyl-L-homocysteine + H(+). Its function is as follows. Specifically methylates the uridine in position 2552 of 23S rRNA at the 2'-O position of the ribose in the fully assembled 50S ribosomal subunit. This chain is Ribosomal RNA large subunit methyltransferase E, found in Salmonella typhi.